A 146-amino-acid polypeptide reads, in one-letter code: Putative pre-16S rRNA nuclease (146 aa).

The protein belongs to the YqgF nuclease family.

The protein resides in the cytoplasm. Functionally, could be a nuclease involved in processing of the 5'-end of pre-16S rRNA. The sequence is that of Putative pre-16S rRNA nuclease from Pseudomonas syringae pv. tomato (strain ATCC BAA-871 / DC3000).